A 729-amino-acid polypeptide reads, in one-letter code: Fatty acid oxidation complex subunit alpha (729 aa).

The interval 1–189 (MLYKGDTLYL…KIGLVDGVVK (189 aa)) is enoyl-CoA hydratase/isomerase. D296 serves as a coordination point for substrate. The segment at 311–729 (ETPKQAAVLG…ARPVGSLKTA (419 aa)) is 3-hydroxyacyl-CoA dehydrogenase. NAD(+) is bound by residues M324, D343, 400–402 (VVE), K407, and S429. H450 functions as the For 3-hydroxyacyl-CoA dehydrogenase activity in the catalytic mechanism. Residue N453 participates in NAD(+) binding. Residues N500 and Y660 each coordinate substrate. The tract at residues 708–729 (RHNEPYYPPVEPARPVGSLKTA) is disordered.

In the N-terminal section; belongs to the enoyl-CoA hydratase/isomerase family. The protein in the C-terminal section; belongs to the 3-hydroxyacyl-CoA dehydrogenase family. In terms of assembly, heterotetramer of two alpha chains (FadB) and two beta chains (FadA).

It carries out the reaction a (3S)-3-hydroxyacyl-CoA + NAD(+) = a 3-oxoacyl-CoA + NADH + H(+). The catalysed reaction is a (3S)-3-hydroxyacyl-CoA = a (2E)-enoyl-CoA + H2O. The enzyme catalyses a 4-saturated-(3S)-3-hydroxyacyl-CoA = a (3E)-enoyl-CoA + H2O. It catalyses the reaction (3S)-3-hydroxybutanoyl-CoA = (3R)-3-hydroxybutanoyl-CoA. It carries out the reaction a (3Z)-enoyl-CoA = a 4-saturated (2E)-enoyl-CoA. The catalysed reaction is a (3E)-enoyl-CoA = a 4-saturated (2E)-enoyl-CoA. It functions in the pathway lipid metabolism; fatty acid beta-oxidation. In terms of biological role, involved in the aerobic and anaerobic degradation of long-chain fatty acids via beta-oxidation cycle. Catalyzes the formation of 3-oxoacyl-CoA from enoyl-CoA via L-3-hydroxyacyl-CoA. It can also use D-3-hydroxyacyl-CoA and cis-3-enoyl-CoA as substrate. This Salmonella newport (strain SL254) protein is Fatty acid oxidation complex subunit alpha.